Reading from the N-terminus, the 453-residue chain is Glutamyl-tRNA(Gln) amidotransferase subunit A (453 aa).

Active-site charge relay system residues include Lys56 and Ser131. The active-site Acyl-ester intermediate is Ser155.

It belongs to the amidase family. GatA subfamily. Heterotrimer of A, B and C subunits.

It carries out the reaction L-glutamyl-tRNA(Gln) + L-glutamine + ATP + H2O = L-glutaminyl-tRNA(Gln) + L-glutamate + ADP + phosphate + H(+). Functionally, allows the formation of correctly charged Gln-tRNA(Gln) through the transamidation of misacylated Glu-tRNA(Gln) in organisms which lack glutaminyl-tRNA synthetase. The reaction takes place in the presence of glutamine and ATP through an activated gamma-phospho-Glu-tRNA(Gln). In Campylobacter jejuni subsp. jejuni serotype O:6 (strain 81116 / NCTC 11828), this protein is Glutamyl-tRNA(Gln) amidotransferase subunit A.